Here is a 229-residue protein sequence, read N- to C-terminus: tRNA (guanine-N(7)-)-methyltransferase (229 aa).

Residues glutamate 59, glutamate 84, aspartate 111, and aspartate 134 each contribute to the S-adenosyl-L-methionine site. Aspartate 134 is a catalytic residue. Substrate-binding positions include lysine 138, aspartate 170, and 205–208 (TKFE).

The protein belongs to the class I-like SAM-binding methyltransferase superfamily. TrmB family.

The catalysed reaction is guanosine(46) in tRNA + S-adenosyl-L-methionine = N(7)-methylguanosine(46) in tRNA + S-adenosyl-L-homocysteine. The protein operates within tRNA modification; N(7)-methylguanine-tRNA biosynthesis. In terms of biological role, catalyzes the formation of N(7)-methylguanine at position 46 (m7G46) in tRNA. This is tRNA (guanine-N(7)-)-methyltransferase from Nitrosospira multiformis (strain ATCC 25196 / NCIMB 11849 / C 71).